Here is a 269-residue protein sequence, read N- to C-terminus: Formamidopyrimidine-DNA glycosylase (269 aa).

The Schiff-base intermediate with DNA role is filled by Pro-2. The active-site Proton donor is the Glu-3. The active-site Proton donor; for beta-elimination activity is the Lys-57. The DNA site is built by His-90, Arg-109, and Lys-150. The segment at 235–269 (QVYGRKGEPCRVCGTPIVATKHAQRATFYCRHCQK) adopts an FPG-type zinc-finger fold. Arg-259 serves as the catalytic Proton donor; for delta-elimination activity.

This sequence belongs to the FPG family. In terms of assembly, monomer. It depends on Zn(2+) as a cofactor.

The catalysed reaction is Hydrolysis of DNA containing ring-opened 7-methylguanine residues, releasing 2,6-diamino-4-hydroxy-5-(N-methyl)formamidopyrimidine.. It catalyses the reaction 2'-deoxyribonucleotide-(2'-deoxyribose 5'-phosphate)-2'-deoxyribonucleotide-DNA = a 3'-end 2'-deoxyribonucleotide-(2,3-dehydro-2,3-deoxyribose 5'-phosphate)-DNA + a 5'-end 5'-phospho-2'-deoxyribonucleoside-DNA + H(+). In terms of biological role, involved in base excision repair of DNA damaged by oxidation or by mutagenic agents. Acts as a DNA glycosylase that recognizes and removes damaged bases. Has a preference for oxidized purines, such as 7,8-dihydro-8-oxoguanine (8-oxoG). Has AP (apurinic/apyrimidinic) lyase activity and introduces nicks in the DNA strand. Cleaves the DNA backbone by beta-delta elimination to generate a single-strand break at the site of the removed base with both 3'- and 5'-phosphates. The sequence is that of Formamidopyrimidine-DNA glycosylase from Salmonella enteritidis PT4 (strain P125109).